We begin with the raw amino-acid sequence, 159 residues long: UPF0756 membrane protein PTH_1668 (159 aa).

Transmembrane regions (helical) follow at residues 15 to 37 (ILIT…SSCI), 61 to 81 (LGLV…KLTI), 117 to 137 (PEII…LRGT), and 138 to 158 (PCGP…ASLF).

Belongs to the UPF0756 family.

It is found in the cell membrane. In Pelotomaculum thermopropionicum (strain DSM 13744 / JCM 10971 / SI), this protein is UPF0756 membrane protein PTH_1668.